A 203-amino-acid polypeptide reads, in one-letter code: Glycerol-3-phosphate acyltransferase (203 aa).

5 consecutive transmembrane segments (helical) span residues 10 to 30 (LLLG…FGIM), 60 to 80 (LAAF…VFLA), 88 to 108 (AAQL…FLGF), 118 to 138 (LGTL…IWAI), and 162 to 182 (FTLG…LIFL).

The protein belongs to the PlsY family. In terms of assembly, probably interacts with PlsX.

The protein localises to the cell inner membrane. It catalyses the reaction an acyl phosphate + sn-glycerol 3-phosphate = a 1-acyl-sn-glycero-3-phosphate + phosphate. It functions in the pathway lipid metabolism; phospholipid metabolism. In terms of biological role, catalyzes the transfer of an acyl group from acyl-phosphate (acyl-PO(4)) to glycerol-3-phosphate (G3P) to form lysophosphatidic acid (LPA). This enzyme utilizes acyl-phosphate as fatty acyl donor, but not acyl-CoA or acyl-ACP. The protein is Glycerol-3-phosphate acyltransferase of Jannaschia sp. (strain CCS1).